The primary structure comprises 396 residues: 1-deoxy-D-xylulose 5-phosphate reductoisomerase (396 aa).

Residues T13, G14, S15, I16, and N127 each contribute to the NADPH site. K128 contributes to the 1-deoxy-D-xylulose 5-phosphate binding site. E129 contacts NADPH. D153 is a Mn(2+) binding site. S154, E155, S184, and H207 together coordinate 1-deoxy-D-xylulose 5-phosphate. E155 serves as a coordination point for Mn(2+). NADPH is bound at residue G213. 1-deoxy-D-xylulose 5-phosphate contacts are provided by S220, N225, K226, and E229. E229 provides a ligand contact to Mn(2+).

This sequence belongs to the DXR family. Mg(2+) is required as a cofactor. Requires Mn(2+) as cofactor.

The catalysed reaction is 2-C-methyl-D-erythritol 4-phosphate + NADP(+) = 1-deoxy-D-xylulose 5-phosphate + NADPH + H(+). Its pathway is isoprenoid biosynthesis; isopentenyl diphosphate biosynthesis via DXP pathway; isopentenyl diphosphate from 1-deoxy-D-xylulose 5-phosphate: step 1/6. Its function is as follows. Catalyzes the NADPH-dependent rearrangement and reduction of 1-deoxy-D-xylulose-5-phosphate (DXP) to 2-C-methyl-D-erythritol 4-phosphate (MEP). This chain is 1-deoxy-D-xylulose 5-phosphate reductoisomerase, found in Pseudomonas savastanoi pv. phaseolicola (strain 1448A / Race 6) (Pseudomonas syringae pv. phaseolicola (strain 1448A / Race 6)).